The chain runs to 183 residues: 2-C-methyl-D-erythritol 2,4-cyclodiphosphate synthase (183 aa).

A divalent metal cation contacts are provided by Asp-10 and His-12. 4-CDP-2-C-methyl-D-erythritol 2-phosphate-binding positions include 10-12 (DVH) and 38-39 (HS). His-46 lines the a divalent metal cation pocket. 4-CDP-2-C-methyl-D-erythritol 2-phosphate is bound by residues 60–62 (DIG) and 65–69 (FPDTD).

The protein belongs to the IspF family. In terms of assembly, homotrimer. The cofactor is a divalent metal cation.

It catalyses the reaction 4-CDP-2-C-methyl-D-erythritol 2-phosphate = 2-C-methyl-D-erythritol 2,4-cyclic diphosphate + CMP. Its pathway is isoprenoid biosynthesis; isopentenyl diphosphate biosynthesis via DXP pathway; isopentenyl diphosphate from 1-deoxy-D-xylulose 5-phosphate: step 4/6. Functionally, involved in the biosynthesis of isopentenyl diphosphate (IPP) and dimethylallyl diphosphate (DMAPP), two major building blocks of isoprenoid compounds. Catalyzes the conversion of 4-diphosphocytidyl-2-C-methyl-D-erythritol 2-phosphate (CDP-ME2P) to 2-C-methyl-D-erythritol 2,4-cyclodiphosphate (ME-CPP) with a corresponding release of cytidine 5-monophosphate (CMP). The chain is 2-C-methyl-D-erythritol 2,4-cyclodiphosphate synthase from Verminephrobacter eiseniae (strain EF01-2).